The chain runs to 274 residues: HTH-type transcriptional regulator GadX (274 aa).

One can recognise an HTH araC/xylS-type domain in the interval 145-242 (TRVCTVINNN…GMTPTEYQER (98 aa)). DNA-binding regions (H-T-H motif) lie at residues 162–183 (ARIA…REEE) and 209–232 (IKRV…RNYY).

Homodimer.

Functionally, positively regulates the expression of about fifteen genes involved in acid resistance such as gadA, gadB and gadC. Depending on the conditions (growth phase and medium), can repress gadW. The sequence is that of HTH-type transcriptional regulator GadX (gadX) from Shigella flexneri.